A 370-amino-acid chain; its full sequence is 3-dehydroquinate synthase (370 aa).

NAD(+)-binding positions include 112 to 116 (GVVGD), 136 to 137 (TS), Lys149, Lys158, and 176 to 179 (TLRT). Residues Glu191, His254, and His276 each coordinate Zn(2+).

It belongs to the sugar phosphate cyclases superfamily. Dehydroquinate synthase family. It depends on Co(2+) as a cofactor. Requires Zn(2+) as cofactor. The cofactor is NAD(+).

It is found in the cytoplasm. It carries out the reaction 7-phospho-2-dehydro-3-deoxy-D-arabino-heptonate = 3-dehydroquinate + phosphate. It functions in the pathway metabolic intermediate biosynthesis; chorismate biosynthesis; chorismate from D-erythrose 4-phosphate and phosphoenolpyruvate: step 2/7. Catalyzes the conversion of 3-deoxy-D-arabino-heptulosonate 7-phosphate (DAHP) to dehydroquinate (DHQ). The chain is 3-dehydroquinate synthase from Xanthomonas campestris pv. campestris (strain 8004).